The following is a 228-amino-acid chain: Probable septum site-determining protein MinC (228 aa).

Belongs to the MinC family. In terms of assembly, interacts with MinD and FtsZ.

In terms of biological role, cell division inhibitor that blocks the formation of polar Z ring septums. Rapidly oscillates between the poles of the cell to destabilize FtsZ filaments that have formed before they mature into polar Z rings. Prevents FtsZ polymerization. This chain is Probable septum site-determining protein MinC, found in Bacillus cereus (strain G9842).